A 98-amino-acid polypeptide reads, in one-letter code: NADH-ubiquinone oxidoreductase chain 4L (98 aa).

The next 3 membrane-spanning stretches (helical) occupy residues 1–21 (MAPINLNLILAFSLALLGVLI), 28–48 (STLLCLEGMMLSLFILMTLLI), and 59–79 (APLILLVFSACEAGVGLALLV).

Belongs to the complex I subunit 4L family. Core subunit of respiratory chain NADH dehydrogenase (Complex I) which is composed of 45 different subunits.

The protein resides in the mitochondrion inner membrane. The catalysed reaction is a ubiquinone + NADH + 5 H(+)(in) = a ubiquinol + NAD(+) + 4 H(+)(out). Its function is as follows. Core subunit of the mitochondrial membrane respiratory chain NADH dehydrogenase (Complex I) which catalyzes electron transfer from NADH through the respiratory chain, using ubiquinone as an electron acceptor. Part of the enzyme membrane arm which is embedded in the lipid bilayer and involved in proton translocation. In Isoodon macrourus (Short-nosed bandicoot), this protein is NADH-ubiquinone oxidoreductase chain 4L (MT-ND4L).